Consider the following 697-residue polypeptide: Phosphoribosylformylglycinamidine synthase subunit PurL (697 aa).

His34 is an active-site residue. ATP is bound by residues Tyr37 and Lys76. Glu78 contributes to the Mg(2+) binding site. Residues 79–82 (SHNH) and Arg101 each bind substrate. The Proton acceptor role is filled by His80. Asp102 lines the Mg(2+) pocket. Position 224 (Gln224) interacts with substrate. Asp250 serves as a coordination point for Mg(2+). Substrate is bound at residue 294-296 (ETQ). ATP is bound by residues Asp472 and Gly509. A substrate-binding site is contributed by Ser512.

This sequence belongs to the FGAMS family. In terms of assembly, monomer. Part of the FGAM synthase complex composed of 1 PurL, 1 PurQ and 2 PurS subunits.

The protein resides in the cytoplasm. The catalysed reaction is N(2)-formyl-N(1)-(5-phospho-beta-D-ribosyl)glycinamide + L-glutamine + ATP + H2O = 2-formamido-N(1)-(5-O-phospho-beta-D-ribosyl)acetamidine + L-glutamate + ADP + phosphate + H(+). It participates in purine metabolism; IMP biosynthesis via de novo pathway; 5-amino-1-(5-phospho-D-ribosyl)imidazole from N(2)-formyl-N(1)-(5-phospho-D-ribosyl)glycinamide: step 1/2. In terms of biological role, part of the phosphoribosylformylglycinamidine synthase complex involved in the purines biosynthetic pathway. Catalyzes the ATP-dependent conversion of formylglycinamide ribonucleotide (FGAR) and glutamine to yield formylglycinamidine ribonucleotide (FGAM) and glutamate. The FGAM synthase complex is composed of three subunits. PurQ produces an ammonia molecule by converting glutamine to glutamate. PurL transfers the ammonia molecule to FGAR to form FGAM in an ATP-dependent manner. PurS interacts with PurQ and PurL and is thought to assist in the transfer of the ammonia molecule from PurQ to PurL. The polypeptide is Phosphoribosylformylglycinamidine synthase subunit PurL (Pyrobaculum aerophilum (strain ATCC 51768 / DSM 7523 / JCM 9630 / CIP 104966 / NBRC 100827 / IM2)).